Consider the following 714-residue polypeptide: MQEHIQSISFDGREIRLKTGLFAPQAGGSVLIESGDTAVLVSATTAPGRQGIDFLPLLVDYEERLYAAGRIPGGYLRREGRPPERATLISRLIDRPMRPLFPQWLRDDIQIVATTLSLDEEVPPDVLAVTGASVATLLAGLPFYGPMAAVRVGLVGDDFILNPTYREMMNGDLDLVVAGTPDGVIMVEAGANQLPEADMIEAIDFAYEAIQELIEAQRALMKELGVEMVSAEPPAKDEELEKFIGDRTTDKIKKVLSQFDLDKNGRDAALDEIKATEIIEAIEALPEDAPLRLKTTEEPKLIDNTFKALTKKLMRSQIVEDGVRVDGRKLDQVRPISCRTAVLPRAVHGSGLFNRGLTQVLSIATLGTPGDAQEMDDLHPSDEKRYLHHYNFPPYSVGETRPMRSPGRREIGHGALAERALLPVLPPKDEFPYVIRVVSEVLSSNGSTSMGSVCGSTLALMDAGVPIAKPVSGAAMGLIKEGKEVRILTDIQGIEDFLGDMDFKVAGTADGITALQMDMKITGLAVEVVAEAIKQALPARLHILEKMTDVIAEPKELSPAAPRLLTIKIDPDLIGMVIGPGGKTIKGITEQTRAKVDIADDGTVTIASSESENAEKAKRLIVNMTRKLNEGDVYFGKVTRIIQIGAFVEIMPGKEGMIHISQLAEGRVGKVEDEVAVGDEVVVKVREIDNKGRINLTRLGIHPDEAAAARVAAQ.

Asp-496 and Asp-502 together coordinate Mg(2+). A KH domain is found at 562 to 621 (PRLLTIKIDPDLIGMVIGPGGKTIKGITEQTRAKVDIADDGTVTIASSESENAEKAKRLI). The 69-residue stretch at 631-699 (GDVYFGKVTR…NKGRINLTRL (69 aa)) folds into the S1 motif domain.

This sequence belongs to the polyribonucleotide nucleotidyltransferase family. Mg(2+) is required as a cofactor.

It localises to the cytoplasm. The enzyme catalyses RNA(n+1) + phosphate = RNA(n) + a ribonucleoside 5'-diphosphate. Involved in mRNA degradation. Catalyzes the phosphorolysis of single-stranded polyribonucleotides processively in the 3'- to 5'-direction. The sequence is that of Polyribonucleotide nucleotidyltransferase from Picosynechococcus sp. (strain ATCC 27264 / PCC 7002 / PR-6) (Agmenellum quadruplicatum).